A 122-amino-acid polypeptide reads, in one-letter code: Large ribosomal subunit protein uL14 (122 aa).

The protein belongs to the universal ribosomal protein uL14 family. As to quaternary structure, part of the 50S ribosomal subunit. Forms a cluster with proteins L3 and L19. In the 70S ribosome, L14 and L19 interact and together make contacts with the 16S rRNA in bridges B5 and B8.

Its function is as follows. Binds to 23S rRNA. Forms part of two intersubunit bridges in the 70S ribosome. This chain is Large ribosomal subunit protein uL14, found in Christiangramia forsetii (strain DSM 17595 / CGMCC 1.15422 / KT0803) (Gramella forsetii).